We begin with the raw amino-acid sequence, 136 residues long: Fluoride-specific ion channel FluC (136 aa).

A run of 4 helical transmembrane segments spans residues 3–23 (TLPP…GAVL), 46–66 (ATLA…GVLF), 78–98 (LLIG…SLEV), and 109–129 (FAAL…VFGL). Gly86 and Thr89 together coordinate Na(+).

The protein belongs to the fluoride channel Fluc/FEX (TC 1.A.43) family.

The protein localises to the cell inner membrane. It carries out the reaction fluoride(in) = fluoride(out). Na(+) is not transported, but it plays an essential structural role and its presence is essential for fluoride channel function. Functionally, fluoride-specific ion channel. Important for reducing fluoride concentration in the cell, thus reducing its toxicity. The sequence is that of Fluoride-specific ion channel FluC from Erythrobacter litoralis (strain HTCC2594).